The sequence spans 437 residues: MLKFHRNVKPQFGAFARYSSLGKHNSRKRVGIIRLAYGLTGIGLVGLAGFAWAQDRHEKTYQKKGVQVEGPWQFYVLTTLPLRTLSRWWGYVNRIEIPLWMRVPAFGLYSKIFGCNLTEADPDDVRQYKNLAEFFTRKLKPGARVIDPDAPIVIPADGKILNYGVIEGGQLEQVKGITYSLDALLGDEKLARLKRSHAIPSPDHIPHIRQEEFAKLNGIHYSLQDLMGHDHGERPSHVKDASAQHIDLLSSTKVAAKSQFTLFGSRETNCLYYAVIYLAPGDYHRFHSPTDWVVERRRHFSGELFSVSPFMARRLGNLFILNERVALMGRYKYGFMSMIPVGATNVGSIRIKFDKDLCTNQFGKLGPVGTFDEAVYTSSSSILHGHPLLRGDEVGNFELGSTVVLVFEAPADFEFLVKQGQKVRVGLPLGRVVPSSH.

The N-terminal 18 residues, 1 to 18 (MLKFHRNVKPQFGAFARY), are a transit peptide targeting the mitochondrion. The Mitochondrial matrix portion of the chain corresponds to 19–38 (SSLGKHNSRKRVGIIRLAYG). A helical transmembrane segment spans residues 39–57 (LTGIGLVGLAGFAWAQDRH). At 58–437 (EKTYQKKGVQ…PLGRVVPSSH (380 aa)) the chain is on the mitochondrial intermembrane side. Active-site charge relay system; for autoendoproteolytic cleavage activity residues include Asp-157, His-287, and Ser-401. Residue Ser-401 is the Schiff-base intermediate with substrate; via pyruvic acid; for decarboxylase activity of the active site. Ser-401 carries the post-translational modification Pyruvic acid (Ser); by autocatalysis.

Belongs to the phosphatidylserine decarboxylase family. PSD-B subfamily. Eukaryotic type I sub-subfamily. In terms of assembly, heterodimer of a large membrane-associated beta subunit and a small pyruvoyl-containing alpha subunit. It depends on pyruvate as a cofactor. Post-translationally, is synthesized initially as an inactive proenzyme. Formation of the active enzyme involves a self-maturation process in which the active site pyruvoyl group is generated from an internal serine residue via an autocatalytic post-translational modification. Two non-identical subunits are generated from the proenzyme in this reaction, and the pyruvate is formed at the N-terminus of the alpha chain, which is derived from the carboxyl end of the proenzyme. The autoendoproteolytic cleavage occurs by a canonical serine protease mechanism, in which the side chain hydroxyl group of the serine supplies its oxygen atom to form the C-terminus of the beta chain, while the remainder of the serine residue undergoes an oxidative deamination to produce ammonia and the pyruvoyl prosthetic group on the alpha chain. During this reaction, the Ser that is part of the protease active site of the proenzyme becomes the pyruvoyl prosthetic group, which constitutes an essential element of the active site of the mature decarboxylase.

The protein resides in the mitochondrion. It localises to the mitochondrion inner membrane. The enzyme catalyses a 1,2-diacyl-sn-glycero-3-phospho-L-serine + H(+) = a 1,2-diacyl-sn-glycero-3-phosphoethanolamine + CO2. It participates in phospholipid metabolism; phosphatidylethanolamine biosynthesis; phosphatidylethanolamine from CDP-diacylglycerol: step 2/2. Functionally, catalyzes the formation of phosphatidylethanolamine (PtdEtn) from phosphatidylserine (PtdSer). Plays a central role in phospholipid metabolism and in the interorganelle trafficking of phosphatidylserine. Together with psd2 and psd3, responsible for the majority of phosphatidylethanolamine synthesis. In Schizosaccharomyces pombe (strain 972 / ATCC 24843) (Fission yeast), this protein is Phosphatidylserine decarboxylase proenzyme 1, mitochondrial.